The following is an 838-amino-acid chain: Protein P (838 aa).

Positions 1–177 (MPLSYQHFRK…FCGSPYSWEQ (177 aa)) are terminal protein domain (TP). The segment at 178–341 (ELQHQTSTRH…YCLTHIVNLL (164 aa)) is spacer. 2 disordered regions span residues 215–238 (QSRL…SGSI) and 285–311 (STSK…RSQS). The span at 285–294 (STSKRQSSSG) shows a compositional bias: polar residues. A polymerase/reverse transcriptase domain (RT) region spans residues 342–685 (EDWGPCTEHG…YLHLYPVARQ (344 aa)). The Reverse transcriptase domain occupies 352–595 (EHNIRIPRTP…YSLNFMGYVI (244 aa)). Positions 424, 546, and 547 each coordinate Mg(2+).

It belongs to the hepadnaviridae P protein family.

It catalyses the reaction DNA(n) + a 2'-deoxyribonucleoside 5'-triphosphate = DNA(n+1) + diphosphate. The enzyme catalyses Endonucleolytic cleavage to 5'-phosphomonoester.. With respect to regulation, activated by host HSP70 and HSP40 in vitro to be able to bind the epsilon loop of the pgRNA. Because deletion of the RNase H region renders the protein partly chaperone-independent, the chaperones may be needed indirectly to relieve occlusion of the RNA-binding site by this domain. Inhibited by several reverse-transcriptase inhibitors: Lamivudine, Adefovir and Entecavir. Functionally, multifunctional enzyme that converts the viral RNA genome into dsDNA in viral cytoplasmic capsids. This enzyme displays a DNA polymerase activity that can copy either DNA or RNA templates, and a ribonuclease H (RNase H) activity that cleaves the RNA strand of RNA-DNA heteroduplexes in a partially processive 3'- to 5'-endonucleasic mode. Neo-synthesized pregenomic RNA (pgRNA) are encapsidated together with the P protein, and reverse-transcribed inside the nucleocapsid. Initiation of reverse-transcription occurs first by binding the epsilon loop on the pgRNA genome, and is initiated by protein priming, thereby the 5'-end of (-)DNA is covalently linked to P protein. Partial (+)DNA is synthesized from the (-)DNA template and generates the relaxed circular DNA (RC-DNA) genome. After budding and infection, the RC-DNA migrates in the nucleus, and is converted into a plasmid-like covalently closed circular DNA (cccDNA). The activity of P protein does not seem to be necessary for cccDNA generation, and is presumably released from (+)DNA by host nuclear DNA repair machinery. The protein is Protein P of Homo sapiens (Human).